The following is a 495-amino-acid chain: Glycerol kinase (495 aa).

Residue Thr16 participates in ADP binding. 2 residues coordinate ATP: Thr16 and Thr17. Thr16 lines the sn-glycerol 3-phosphate pocket. ADP is bound at residue Arg20. Sn-glycerol 3-phosphate is bound by residues Arg86, Glu87, Tyr138, and Asp246. Positions 86, 87, 138, 246, and 247 each coordinate glycerol. ADP contacts are provided by Thr268 and Gly316. Positions 268, 316, 320, and 417 each coordinate ATP. 2 residues coordinate ADP: Gly417 and Asn421.

The protein belongs to the FGGY kinase family.

It carries out the reaction glycerol + ATP = sn-glycerol 3-phosphate + ADP + H(+). Its pathway is polyol metabolism; glycerol degradation via glycerol kinase pathway; sn-glycerol 3-phosphate from glycerol: step 1/1. Its activity is regulated as follows. Inhibited by fructose 1,6-bisphosphate (FBP). Functionally, key enzyme in the regulation of glycerol uptake and metabolism. Catalyzes the phosphorylation of glycerol to yield sn-glycerol 3-phosphate. This is Glycerol kinase from Synechocystis sp. (strain ATCC 27184 / PCC 6803 / Kazusa).